A 217-amino-acid polypeptide reads, in one-letter code: Redox-sensing transcriptional repressor Rex (217 aa).

Residues 18–57 constitute a DNA-binding region (H-T-H motif); the sequence is LYYRFLKNLHASGKQRVSSAELSDAVKVDSATIRRDFSYF. 92–97 contributes to the NAD(+) binding site; it reads GVGNLG.

The protein belongs to the transcriptional regulatory Rex family. As to quaternary structure, homodimer.

The protein localises to the cytoplasm. Functionally, modulates transcription in response to changes in cellular NADH/NAD(+) redox state. The sequence is that of Redox-sensing transcriptional repressor Rex from Bacillus pumilus (strain SAFR-032).